A 159-amino-acid polypeptide reads, in one-letter code: Regulatory protein RecX (159 aa).

This sequence belongs to the RecX family.

It is found in the cytoplasm. Modulates RecA activity. This Chlorobium limicola (strain DSM 245 / NBRC 103803 / 6330) protein is Regulatory protein RecX.